Consider the following 161-residue polypeptide: RNA pyrophosphohydrolase (161 aa).

In terms of domain architecture, Nudix hydrolase spans 9–155 (PYRPCVGVML…KRRVYRQVVD (147 aa)). The short motif at 44-65 (GGIDDGEELHPAALRELSEETG) is the Nudix box element.

Belongs to the Nudix hydrolase family. RppH subfamily. It depends on a divalent metal cation as a cofactor.

Functionally, accelerates the degradation of transcripts by removing pyrophosphate from the 5'-end of triphosphorylated RNA, leading to a more labile monophosphorylated state that can stimulate subsequent ribonuclease cleavage. This is RNA pyrophosphohydrolase from Novosphingobium aromaticivorans (strain ATCC 700278 / DSM 12444 / CCUG 56034 / CIP 105152 / NBRC 16084 / F199).